Consider the following 686-residue polypeptide: U-box domain-containing protein 19 (686 aa).

A U-box domain is found at 277 to 351; the sequence is LNVDDLRCPI…QSYSKQNGVV (75 aa). ARM repeat units lie at residues 406–445, 448–489, 491–533, 536–577, and 579–620; these read TFYR…NLSK, AGKT…YLSS, GDYS…SLLM, PDNH…KMAE, and PDGM…NLCH.

The catalysed reaction is S-ubiquitinyl-[E2 ubiquitin-conjugating enzyme]-L-cysteine + [acceptor protein]-L-lysine = [E2 ubiquitin-conjugating enzyme]-L-cysteine + N(6)-ubiquitinyl-[acceptor protein]-L-lysine.. Its pathway is protein modification; protein ubiquitination. Functions as an E3 ubiquitin ligase. The polypeptide is U-box domain-containing protein 19 (PUB19) (Arabidopsis thaliana (Mouse-ear cress)).